A 708-amino-acid polypeptide reads, in one-letter code: Leukotoxin translocation ATP-binding protein LktB (708 aa).

The Peptidase C39 domain occupies 1–126; that stretch reads MEANHQRNDL…ACYQGQLILV (126 aa). In terms of domain architecture, ABC transmembrane type-1 spans 155 to 437; it reads FLETLIVSIF…LAQLWQDFQQ (283 aa). 5 helical membrane passes run 159 to 179, 192 to 212, 270 to 290, 296 to 316, and 389 to 409; these read LIVSIFLQIFALITPLFFQVV, LNIITVALAIVIIFEIVLSGL, ALTSVLDLLFSFIFFAVMWYY, LVILGSLPCYILWSIFISPIL, and VMVINLWLGAHLVISGDLSIG. The region spanning 469–704 is the ABC transporter domain; the sequence is IAFKNIRFRY…SNGLYSYLHQ (236 aa). 503-510 provides a ligand contact to ATP; sequence GRSGSGKS.

Belongs to the ABC transporter superfamily. Protein-1 exporter (TC 3.A.1.109) family. In terms of assembly, homodimer.

The protein localises to the cell inner membrane. The enzyme catalyses ATP + H2O + proteinSide 1 = ADP + phosphate + proteinSide 2.. In terms of biological role, part of the ABC transporter complex LktBD involved in leukotoxin export. Transmembrane domains (TMD) form a pore in the inner membrane and the ATP-binding domain (NBD) is responsible for energy generation. The chain is Leukotoxin translocation ATP-binding protein LktB (lktB) from Mannheimia glucosida.